The following is a 122-amino-acid chain: Small ribosomal subunit protein uS13 (122 aa).

The tract at residues 95–122 (GLPVHGQRTKTNARTRKGPARTVAGKKK) is disordered.

This sequence belongs to the universal ribosomal protein uS13 family. As to quaternary structure, part of the 30S ribosomal subunit. Forms a loose heterodimer with protein S19. Forms two bridges to the 50S subunit in the 70S ribosome.

In terms of biological role, located at the top of the head of the 30S subunit, it contacts several helices of the 16S rRNA. In the 70S ribosome it contacts the 23S rRNA (bridge B1a) and protein L5 of the 50S subunit (bridge B1b), connecting the 2 subunits; these bridges are implicated in subunit movement. Contacts the tRNAs in the A and P-sites. In Geotalea uraniireducens (strain Rf4) (Geobacter uraniireducens), this protein is Small ribosomal subunit protein uS13.